Consider the following 572-residue polypeptide: Hemagglutinin-neuraminidase (572 aa).

The Intravirion segment spans residues 1-31 (MEYWKHTNHRKDAGNELETSMATHGNKLTNK). A helical membrane pass occupies residues 32–52 (ITYILWTIILVLLSIVLIIVL). At 53–572 (INSIKSEKAH…FKTEVPKSCS (520 aa)) the chain is on the virion surface side. 2 cysteine pairs are disulfide-bonded: Cys190-Cys214 and Cys256-Cys269. An involved in neuraminidase activity region spans residues 252–257 (NRKSCS). Asn308 and Asn351 each carry an N-linked (GlcNAc...) asparagine; by host glycan. Intrachain disulfides connect Cys355/Cys469 and Cys463/Cys473. Residue Asn523 is glycosylated (N-linked (GlcNAc...) asparagine; by host). Cysteines 535 and 544 form a disulfide.

The protein belongs to the paramyxoviruses hemagglutinin-neuraminidase family. In terms of assembly, homotetramer; composed of disulfide-linked homodimers. Interacts with F protein trimer.

It localises to the virion membrane. It is found in the host cell membrane. The enzyme catalyses Hydrolysis of alpha-(2-&gt;3)-, alpha-(2-&gt;6)-, alpha-(2-&gt;8)- glycosidic linkages of terminal sialic acid residues in oligosaccharides, glycoproteins, glycolipids, colominic acid and synthetic substrates.. Functionally, attaches the virus to sialic acid-containing cell receptors and thereby initiating infection. Binding of HN protein to the receptor induces a conformational change that allows the F protein to trigger virion/cell membranes fusion. Its function is as follows. Neuraminidase activity ensures the efficient spread of the virus by dissociating the mature virions from the neuraminic acid containing glycoproteins. The protein is Hemagglutinin-neuraminidase (HN) of Human parainfluenza 3 virus (strain Tex/9305/82) (HPIV-3).